Here is a 160-residue protein sequence, read N- to C-terminus: Outer membrane protein MT2024.1 (160 aa).

A signal peptide spans 1-22 (MSWSRVIAYGLLPGLALALTCG).

It is found in the cell outer membrane. The polypeptide is Outer membrane protein MT2024.1 (Mycobacterium tuberculosis (strain CDC 1551 / Oshkosh)).